Here is a 344-residue protein sequence, read N- to C-terminus: Acireductone dioxygenase (344 aa).

Fe(2+) contacts are provided by histidine 92, histidine 94, glutamate 98, and histidine 137. Residues histidine 92, histidine 94, glutamate 98, and histidine 137 each contribute to the Ni(2+) site.

This sequence belongs to the acireductone dioxygenase (ARD) family. Fe(2+) is required as a cofactor. Ni(2+) serves as cofactor.

The protein localises to the cytoplasm. The protein resides in the nucleus. The enzyme catalyses 1,2-dihydroxy-5-(methylsulfanyl)pent-1-en-3-one + O2 = 4-methylsulfanyl-2-oxobutanoate + formate + 2 H(+). The catalysed reaction is 1,2-dihydroxy-5-(methylsulfanyl)pent-1-en-3-one + O2 = 3-(methylsulfanyl)propanoate + CO + formate + 2 H(+). It functions in the pathway amino-acid biosynthesis; L-methionine biosynthesis via salvage pathway; L-methionine from S-methyl-5-thio-alpha-D-ribose 1-phosphate: step 5/6. Its function is as follows. Catalyzes 2 different reactions between oxygen and the acireductone 1,2-dihydroxy-3-keto-5-methylthiopentene (DHK-MTPene) depending upon the metal bound in the active site. Fe-containing acireductone dioxygenase (Fe-ARD) produces formate and 2-keto-4-methylthiobutyrate (KMTB), the alpha-ketoacid precursor of methionine in the methionine recycle pathway. Ni-containing acireductone dioxygenase (Ni-ARD) produces methylthiopropionate, carbon monoxide and formate, and does not lie on the methionine recycle pathway. The protein is Acireductone dioxygenase of Leishmania major.